The following is a 248-amino-acid chain: MLLGIITLFPDMFNAITRYGVVGRSVRKGGLVIKIWNPRDFTYDQYHKVDDRPYGGGVGMIMMIQPLKRAINQAKNDLGCDAKVIYLSPQGKRLCQKYVYDLAYNNQALILVCGRYQGIDERLIKMEIDEEWSIGDYVLSGGELASMVLIDAMARVLPGTLKNRNSQKSDSFFENKLDCPYYTRPKIYEGMQVPSVLLSGNHRDINKWRLKYALGNTWIKRPDLLKKIQLTQEEQLLLTEFKNEYLSG.

Residues Gly114 and Ile134–Leu139 each bind S-adenosyl-L-methionine.

It belongs to the RNA methyltransferase TrmD family. Homodimer.

Its subcellular location is the cytoplasm. The enzyme catalyses guanosine(37) in tRNA + S-adenosyl-L-methionine = N(1)-methylguanosine(37) in tRNA + S-adenosyl-L-homocysteine + H(+). Functionally, specifically methylates guanosine-37 in various tRNAs. The polypeptide is tRNA (guanine-N(1)-)-methyltransferase (Blochmanniella floridana).